Consider the following 198-residue polypeptide: Glutamyl-tRNA(Gln) amidotransferase subunit C, mitochondrial (198 aa).

Belongs to the GatC family. Subunit of the heterotrimeric GatCAB amidotransferase (AdT) complex, composed of A, B and C subunits.

The protein localises to the mitochondrion. The catalysed reaction is L-glutamyl-tRNA(Gln) + L-glutamine + ATP + H2O = L-glutaminyl-tRNA(Gln) + L-glutamate + ADP + phosphate + H(+). Allows the formation of correctly charged Gln-tRNA(Gln) through the transamidation of misacylated Glu-tRNA(Gln) in the mitochondria. The reaction takes place in the presence of glutamine and ATP through an activated gamma-phospho-Glu-tRNA(Gln). This chain is Glutamyl-tRNA(Gln) amidotransferase subunit C, mitochondrial, found in Caenorhabditis remanei (Caenorhabditis vulgaris).